Here is a 30-residue protein sequence, read N- to C-terminus: Thrombin-like enzyme LmrSP-2 (30 aa).

Belongs to the peptidase S1 family. Snake venom subfamily. In terms of tissue distribution, expressed by the venom gland.

It is found in the secreted. Functionally, thrombin-like snake venom serine protease that cleaves alpha-chain of fibrinogen (FGA) releases only fibrinopeptide A. Shows coagulant, esterase and amidase activities. This chain is Thrombin-like enzyme LmrSP-2, found in Lachesis muta rhombeata (Bushmaster).